The primary structure comprises 483 residues: GDP-fucose protein O-fucosyltransferase 4 (483 aa).

Residue M1 is a topological domain, cytoplasmic. The helical; Signal-anchor for type II membrane protein transmembrane segment at 2–21 (ALCLWLFLVLPICCWCQGAV) threads the bilayer. Over 22–483 (DLGDSGVFQP…RARGLSNDSR (462 aa)) the chain is Lumenal. N-linked (GlcNAc...) asparagine glycans are attached at residues N151 and N303. A disulfide bond links C374 and C377. Positions 387–425 (RKAHRKNPKQNQPPQPKMANSSHMGCPLPSPGYGPVENV) are disordered. Residues N406, N428, N456, and N480 are each glycosylated (N-linked (GlcNAc...) asparagine).

It belongs to the glycosyltransferase 10 family.

The protein resides in the endoplasmic reticulum membrane. The catalysed reaction is L-threonyl-[protein] + GDP-beta-L-fucose = 3-O-(alpha-L-fucosyl)-L-threonyl-[protein] + GDP + H(+). It catalyses the reaction L-seryl-[protein] + GDP-beta-L-fucose = 3-O-(alpha-L-fucosyl)-L-seryl-[protein] + GDP + H(+). The protein operates within protein modification; protein glycosylation. In terms of biological role, protein O-fucosyltransferase that specifically catalyzes O-fucosylation of serine or threonine residues in EMI domains of target proteins. Attaches fucose through an O-glycosidic linkage. O-fucosylation of EMI domain-containing proteins may be required for facilitating protein folding and secretion. The sequence is that of GDP-fucose protein O-fucosyltransferase 4 (fut11) from Danio rerio (Zebrafish).